Consider the following 493-residue polypeptide: Trans-aconitate decarboxylase 1 (493 aa).

The segment at 1-22 is disordered; it reads MAPALNANPTTKRDELSAPSAS.

The protein belongs to the class-II fumarase/aspartase family.

The protein resides in the cytoplasm. The protein localises to the cytosol. It localises to the nucleus. The enzyme catalyses trans-aconitate + H(+) = itaconate + CO2. Its pathway is secondary metabolite biosynthesis. Trans-aconitate decarboxylase; part of the gene cluster that mediates the biosynthesis of itaconic acid and 2-hydroxyparaconate. Cis-aconitate is secreted by the mitochondrial tricarboxylate transporter MTT1. In the cytosol cis-aconitate is converted into trans-aconitate via isomerization by the aconitate-delta-isomerase ADI1. Decarboxylation of trans-aconitate by the trans-aconitate decarboxylase TAD1 then leads then to the production of itaconic acid. The cytochrome P450 monooxygenase CYP3 further converts itaconate to 2-hydroxyparaconate via oxidation of the double bond, leading to a transient epoxide, which can subsequently be lactonized to produce 2-hydroxyparaconate. Secretion of itaconate and possibly 2-hydroxyparaconate into the medium is mediated by the major facilitator ITP1. The glyoxalase domain-containing protein RDO1 is not involved in the biosynthesis of itaconate and 2-hydroxyparaconate, however, it might play a role in the further conversion of 2-hydroxyparaconate to itatartarate. In Mycosarcoma maydis (Corn smut fungus), this protein is Trans-aconitate decarboxylase 1.